Reading from the N-terminus, the 263-residue chain is Undecaprenyl-diphosphatase (263 aa).

8 helical membrane-spanning segments follow: residues 1 to 21 (MSYL…FLPI), 41 to 61 (FTKA…LVLY), 69 to 89 (WGFY…GFVV), 96 to 116 (LMGS…ILIW), 147 to 167 (AIAM…GLTL), 177 to 197 (FSFF…LLKI), 208 to 228 (LLLV…KFFI), and 238 to 258 (GFGY…YTGH).

It belongs to the UppP family.

Its subcellular location is the cell inner membrane. It catalyses the reaction di-trans,octa-cis-undecaprenyl diphosphate + H2O = di-trans,octa-cis-undecaprenyl phosphate + phosphate + H(+). Catalyzes the dephosphorylation of undecaprenyl diphosphate (UPP). Confers resistance to bacitracin. In Bdellovibrio bacteriovorus (strain ATCC 15356 / DSM 50701 / NCIMB 9529 / HD100), this protein is Undecaprenyl-diphosphatase.